A 194-amino-acid polypeptide reads, in one-letter code: ATP-dependent Clp protease proteolytic subunit (194 aa).

Ser98 (nucleophile) is an active-site residue. His123 is a catalytic residue.

It belongs to the peptidase S14 family. Fourteen ClpP subunits assemble into 2 heptameric rings which stack back to back to give a disk-like structure with a central cavity, resembling the structure of eukaryotic proteasomes.

Its subcellular location is the cytoplasm. The enzyme catalyses Hydrolysis of proteins to small peptides in the presence of ATP and magnesium. alpha-casein is the usual test substrate. In the absence of ATP, only oligopeptides shorter than five residues are hydrolyzed (such as succinyl-Leu-Tyr-|-NHMec, and Leu-Tyr-Leu-|-Tyr-Trp, in which cleavage of the -Tyr-|-Leu- and -Tyr-|-Trp bonds also occurs).. In terms of biological role, cleaves peptides in various proteins in a process that requires ATP hydrolysis. Has a chymotrypsin-like activity. Plays a major role in the degradation of misfolded proteins. The polypeptide is ATP-dependent Clp protease proteolytic subunit (Clostridium tetani (strain Massachusetts / E88)).